We begin with the raw amino-acid sequence, 1114 residues long: Lysylphosphatidylglycerol biosynthesis bifunctional protein LysX (1114 aa).

The span at 1 to 11 (MSASTETHHAS) shows a compositional bias: basic and acidic residues. Positions 1–26 (MSASTETHHASEAAVPTAPRPRPGLG) are disordered. Positions 1-618 (MSASTETHHA…GLHSDGSAPG (618 aa)) are phosphatidylglycerol lysyltransferase. A run of 6 helical transmembrane segments spans residues 38-58 (IAGL…ISPV), 77-97 (APDT…ALAS), 101-121 (IAWW…VIVS), 126-146 (NVNA…LIAA), 164-184 (GVLI…VELF), and 219-239 (FVNT…VITL). The tract at residues 619–1114 (EGLAPTATGP…LAFPLAKPRQ (496 aa)) is lysine--tRNA ligase. The segment at residues 674–751 (VRIAGRLLRI…LSLLANEWRM (78 aa)) is a DNA-binding region (OB). Residues D1025 and E1032 each contribute to the Mg(2+) site.

This sequence in the N-terminal section; belongs to the LPG synthetase family. In the C-terminal section; belongs to the class-II aminoacyl-tRNA synthetase family. Mg(2+) serves as cofactor.

It localises to the cell membrane. It catalyses the reaction tRNA(Lys) + L-lysine + ATP = L-lysyl-tRNA(Lys) + AMP + diphosphate. The enzyme catalyses L-lysyl-tRNA(Lys) + a 1,2-diacyl-sn-glycero-3-phospho-(1'-sn-glycerol) = a 1,2-diacyl-sn-glycero-3-phospho-1'-(3'-O-L-lysyl)-sn-glycerol + tRNA(Lys). Its function is as follows. Catalyzes the production of L-lysyl-tRNA(Lys)transfer and the transfer of a lysyl group from L-lysyl-tRNA(Lys) to membrane-bound phosphatidylglycerol (PG), which produces lysylphosphatidylglycerol (LPG), one of the components of the bacterial membrane with a positive net charge. LPG synthesis contributes to the resistance to cationic antimicrobial peptides (CAMPs) and likely protects M.tuberculosis against the CAMPs produced by competiting microorganisms (bacteriocins). In fact, the modification of anionic phosphatidylglycerol with positively charged L-lysine results in repulsion of the peptides. In Rhodococcus jostii (strain RHA1), this protein is Lysylphosphatidylglycerol biosynthesis bifunctional protein LysX (lysX).